The following is a 244-amino-acid chain: 1-(5-phosphoribosyl)-5-[(5-phosphoribosylamino)methylideneamino] imidazole-4-carboxamide isomerase (244 aa).

Catalysis depends on Asp-15, which acts as the Proton acceptor. Asp-136 serves as the catalytic Proton donor.

This sequence belongs to the HisA/HisF family.

The protein localises to the cytoplasm. It carries out the reaction 1-(5-phospho-beta-D-ribosyl)-5-[(5-phospho-beta-D-ribosylamino)methylideneamino]imidazole-4-carboxamide = 5-[(5-phospho-1-deoxy-D-ribulos-1-ylimino)methylamino]-1-(5-phospho-beta-D-ribosyl)imidazole-4-carboxamide. Its pathway is amino-acid biosynthesis; L-histidine biosynthesis; L-histidine from 5-phospho-alpha-D-ribose 1-diphosphate: step 4/9. The protein is 1-(5-phosphoribosyl)-5-[(5-phosphoribosylamino)methylideneamino] imidazole-4-carboxamide isomerase of Dehalococcoides mccartyi (strain CBDB1).